Here is a 118-residue protein sequence, read N- to C-terminus: Large ribosomal subunit protein bL20 (118 aa).

The protein belongs to the bacterial ribosomal protein bL20 family.

Functionally, binds directly to 23S ribosomal RNA and is necessary for the in vitro assembly process of the 50S ribosomal subunit. It is not involved in the protein synthesizing functions of that subunit. The polypeptide is Large ribosomal subunit protein bL20 (Shewanella baltica (strain OS223)).